A 395-amino-acid polypeptide reads, in one-letter code: Enoyl-[acyl-carrier-protein] reductase [NADH] (395 aa).

NAD(+) contacts are provided by residues 48 to 53, 74 to 75, 111 to 112, and 139 to 140; these read GASTGY, FE, DA, and LA. Tyr-225 contributes to the substrate binding site. Tyr-235 acts as the Proton donor in catalysis. Residues Lys-244 and 273–275 contribute to the NAD(+) site; that span reads LVT.

It belongs to the TER reductase family. In terms of assembly, monomer.

It carries out the reaction a 2,3-saturated acyl-[ACP] + NAD(+) = a (2E)-enoyl-[ACP] + NADH + H(+). Its pathway is lipid metabolism; fatty acid biosynthesis. In terms of biological role, involved in the final reduction of the elongation cycle of fatty acid synthesis (FAS II). Catalyzes the reduction of a carbon-carbon double bond in an enoyl moiety that is covalently linked to an acyl carrier protein (ACP). This chain is Enoyl-[acyl-carrier-protein] reductase [NADH], found in Saccharophagus degradans (strain 2-40 / ATCC 43961 / DSM 17024).